Here is a 471-residue protein sequence, read N- to C-terminus: Heat shock 70 kDa protein 13 (471 aa).

The N-terminal stretch at 1 to 22 (MAREMTILGSAVLTLLLAGYLA) is a signal peptide. Residues 315-341 (EQDRKEPHSSDTELPKDKLSSADDHRV) show a composition bias toward basic and acidic residues. Residues 315-352 (EQDRKEPHSSDTELPKDKLSSADDHRVNSGFGRGLSDK) are disordered.

It belongs to the heat shock protein 70 family. As to quaternary structure, binds UBQLN2. In terms of tissue distribution, constitutively expressed in all tissues.

The protein resides in the microsome. The protein localises to the endoplasmic reticulum. In terms of biological role, has peptide-independent ATPase activity. In Homo sapiens (Human), this protein is Heat shock 70 kDa protein 13 (HSPA13).